Consider the following 351-residue polypeptide: Ferredoxin--NADP reductase (351 aa).

FAD is bound by residues Asp44, Gln52, Tyr57, Val97, Phe132, Asp296, and Ser337.

It belongs to the ferredoxin--NADP reductase type 2 family. Homodimer. FAD is required as a cofactor.

It carries out the reaction 2 reduced [2Fe-2S]-[ferredoxin] + NADP(+) + H(+) = 2 oxidized [2Fe-2S]-[ferredoxin] + NADPH. The protein is Ferredoxin--NADP reductase of Paraburkholderia phymatum (strain DSM 17167 / CIP 108236 / LMG 21445 / STM815) (Burkholderia phymatum).